The sequence spans 36 residues: VPLEPVYPGDNATPEQMAHYAAELRRYINMLTRPRY.

At tyrosine 36 the chain carries Tyrosine amide.

The protein belongs to the NPY family.

It is found in the secreted. Functionally, hormone secreted by pancreatic cells that acts as a regulator of pancreatic and gastrointestinal functions probably by signaling through the G protein-coupled receptor NPY4R2. In Erinaceus europaeus (Western European hedgehog), this protein is Pancreatic polypeptide (PPY).